Reading from the N-terminus, the 365-residue chain is Mannose-1-phosphate guanylyltransferase catalytic subunit beta (365 aa).

A substrate-binding domain region spans residues 2–221; sequence KALILVGGYG…PGFWMDVGQP (220 aa). D109 contributes to the GDP-alpha-D-mannose binding site. D109 provides a ligand contact to Mg(2+). The active site involves K161. D217 is a GDP-alpha-D-mannose binding site. D217 serves as a coordination point for Mg(2+). Residues 244 to 365 form a hexapeptide repeat domain region; the sequence is ETGSNIHPTA…VNVPSKDIIM (122 aa).

Belongs to the transferase hexapeptide repeat family. As to quaternary structure, component of the GMPPA-GMPPB mannose-1-phosphate guanylyltransferase complex composed of 4 GMPPA subunits and 8 tag-335/GMPPB subunits; the complex is organized into three layers, a central layer made up of 2 GMPPA dimers sandwiched between two layers each made up of 2 tag-335/GMPPB dimers. Catalytic activity of tag-335/GMPPB is reduced when part of the complex and binding of GDP-alpha-D-Mannose by GMPPA induces allosteric feedback inhibition of tag-335/GMPPB. Mg(2+) serves as cofactor.

The catalysed reaction is alpha-D-mannose 1-phosphate + GTP + H(+) = GDP-alpha-D-mannose + diphosphate. It functions in the pathway nucleotide-sugar biosynthesis; GDP-alpha-D-mannose biosynthesis; GDP-alpha-D-mannose from alpha-D-mannose 1-phosphate (GTP route): step 1/1. Enzyme activity is reduced by incorporation into the GMPPA-GMPPB mannose-1-phosphate guanylyltransferase complex. Allosterically inhibited, when part of the GMPPA-GMPPB complex, by GDP-alpha-D-mannose binding to GMPPA. Catalytic subunit of the GMPPA-GMPPB mannose-1-phosphate guanylyltransferase complex. Catalyzes the formation of GDP-mannose, an essential precursor of glycan moieties of glycoproteins and glycolipids. Can catalyze the reverse reaction in vitro. Together with GMPPA regulates GDP-alpha-D-mannose levels. This Caenorhabditis elegans protein is Mannose-1-phosphate guanylyltransferase catalytic subunit beta (tag-335).